Reading from the N-terminus, the 467-residue chain is Dynactin subunit 4 (467 aa).

Position 2 is an N-acetylalanine (alanine 2). The stretch at 152–172 (QQLAQKEKVERDRKKLARRRN) forms a coiled coil. The residue at position 203 (serine 203) is a Phosphoserine. Residue lysine 222 forms a Glycyl lysine isopeptide (Lys-Gly) (interchain with G-Cter in SUMO2) linkage. Position 414 is a phosphothreonine (threonine 414).

Belongs to the dynactin subunit 4 family. In terms of assembly, subunit of dynactin, a multiprotein complex part of a tripartite complex with dynein and a adapter, such as BICDL1, BICD2 or HOOK3. The dynactin complex is built around ACTR1A/ACTB filament and consists of an actin-related filament composed of a shoulder domain, a pointed end and a barbed end. Its length is defined by its flexible shoulder domain. The soulder is composed of 2 DCTN1 subunits, 4 DCTN2 and 2 DCTN3. The 4 DCNT2 (via N-terminus) bind the ACTR1A filament and act as molecular rulers to determine the length. The pointed end is important for binding dynein-dynactin cargo adapters. Consists of 4 subunits: ACTR10, DCNT4, DCTN5 and DCTN6. The barbed end is composed of a CAPZA1:CAPZB heterodimers, which binds ACTR1A/ACTB filament and dynactin and stabilizes dynactin. Interacts with ATP7B, but not ATP7A, in a copper-dependent manner. Interacts with ANK2; this interaction is required for localization at costameres. Interacts with N4BP2L1.

The protein resides in the cytoplasm. The protein localises to the cytoskeleton. Its subcellular location is the microtubule organizing center. It is found in the centrosome. It localises to the stress fiber. The protein resides in the cell cortex. The protein localises to the myofibril. Its subcellular location is the sarcomere. Functionally, part of the dynactin complex that activates the molecular motor dynein for ultra-processive transport along microtubules. This Mus musculus (Mouse) protein is Dynactin subunit 4 (Dctn4).